We begin with the raw amino-acid sequence, 467 residues long: tRNA-2-methylthio-N(6)-dimethylallyladenosine synthase (467 aa).

The segment at Met1–Ala20 is disordered. The MTTase N-terminal domain occupies Arg23–Gly143. 6 residues coordinate [4Fe-4S] cluster: Cys32, Cys68, Cys106, Cys184, Cys188, and Cys191. One can recognise a Radical SAM core domain in the interval Arg170–Ala402. Residues Asp405–Ala467 enclose the TRAM domain.

The protein belongs to the methylthiotransferase family. MiaB subfamily. As to quaternary structure, monomer. Requires [4Fe-4S] cluster as cofactor.

It is found in the cytoplasm. It carries out the reaction N(6)-dimethylallyladenosine(37) in tRNA + (sulfur carrier)-SH + AH2 + 2 S-adenosyl-L-methionine = 2-methylsulfanyl-N(6)-dimethylallyladenosine(37) in tRNA + (sulfur carrier)-H + 5'-deoxyadenosine + L-methionine + A + S-adenosyl-L-homocysteine + 2 H(+). In terms of biological role, catalyzes the methylthiolation of N6-(dimethylallyl)adenosine (i(6)A), leading to the formation of 2-methylthio-N6-(dimethylallyl)adenosine (ms(2)i(6)A) at position 37 in tRNAs that read codons beginning with uridine. This is tRNA-2-methylthio-N(6)-dimethylallyladenosine synthase from Brucella abortus (strain S19).